The primary structure comprises 252 residues: Eukaryotic translation initiation factor 3 subunit J (252 aa).

2 disordered regions span residues 24-107 (VPAG…TPEE) and 209-232 (KQSK…TMKD). A compositionally biased stretch (acidic residues) spans 36–56 (EDEEDDVKDNWDDEEEEEEVK). Over residues 57–107 (EAEVKQEPKVSEKKKIAEKIKEKEKQQKKKQEELKKRLEAPEEHKELTPEE) the composition is skewed to basic and acidic residues. Positions 65–130 (KVSEKKKIAE…ESDLELAKET (66 aa)) form a coiled coil.

It belongs to the eIF-3 subunit J family. In terms of assembly, component of the eukaryotic translation initiation factor 3 (eIF-3) complex, which is composed of 13 subunits: EIF3A, EIF3B, EIF3C, EIF3D, EIF3E, EIF3F, EIF3G, EIF3H, EIF3I, EIF3J, EIF3K, EIF3L and EIF3M.

It is found in the cytoplasm. Functionally, component of the eukaryotic translation initiation factor 3 (eIF-3) complex, which is involved in protein synthesis of a specialized repertoire of mRNAs and, together with other initiation factors, stimulates binding of mRNA and methionyl-tRNAi to the 40S ribosome. The eIF-3 complex specifically targets and initiates translation of a subset of mRNAs involved in cell proliferation. This Gallus gallus (Chicken) protein is Eukaryotic translation initiation factor 3 subunit J.